Consider the following 94-residue polypeptide: Putative regulatory protein Sfum_3631 (94 aa).

The protein belongs to the RemA family.

In Syntrophobacter fumaroxidans (strain DSM 10017 / MPOB), this protein is Putative regulatory protein Sfum_3631.